The following is a 180-amino-acid chain: MAASGLKVPEMALRVCVVPLALASLWEMATNAQADDTYGEVKFSDLSGFSYLVGVNAVTAAYALVSILLSSLKPLARYDWVILVMDQASAYLLVTSASAAAELLQLARRGDREVSWGEVCSYFGRFCGKATVSLALHAAALACFVALALVSAFRVLSTTGSSCHPPKHAQAQEHEQGRYN.

The Cytoplasmic segment spans residues 1 to 7 (MAASGLK). A helical membrane pass occupies residues 8-28 (VPEMALRVCVVPLALASLWEM). Topologically, residues 29–48 (ATNAQADDTYGEVKFSDLSG) are extracellular. Residues 49-69 (FSYLVGVNAVTAAYALVSILL) form a helical membrane-spanning segment. The Cytoplasmic segment spans residues 70–79 (SSLKPLARYD). The helical transmembrane segment at 80–100 (WVILVMDQASAYLLVTSASAA) threads the bilayer. Topologically, residues 101–129 (AELLQLARRGDREVSWGEVCSYFGRFCGK) are extracellular. A helical transmembrane segment spans residues 130–150 (ATVSLALHAAALACFVALALV). At 151 to 180 (SAFRVLSTTGSSCHPPKHAQAQEHEQGRYN) the chain is on the cytoplasmic side. The interval 161-180 (SSCHPPKHAQAQEHEQGRYN) is disordered. The span at 170-180 (QAQEHEQGRYN) shows a compositional bias: basic and acidic residues.

The protein belongs to the Casparian strip membrane proteins (CASP) family. Homodimer and heterodimers.

Its subcellular location is the cell membrane. In Sorghum bicolor (Sorghum), this protein is CASP-like protein 2D1.